We begin with the raw amino-acid sequence, 450 residues long: Nicotinamide phosphoribosyltransferase (450 aa).

Position 210 (R210) interacts with diphosphate. D233 provides a ligand contact to beta-nicotinamide D-ribonucleotide. 2 residues coordinate diphosphate: H249 and R310. Beta-nicotinamide D-ribonucleotide is bound by residues 310–312 (RAD), 364–365 (GD), and R403.

This sequence belongs to the NAPRTase family.

It catalyses the reaction beta-nicotinamide D-ribonucleotide + diphosphate = 5-phospho-alpha-D-ribose 1-diphosphate + nicotinamide + H(+). It participates in cofactor biosynthesis; NAD(+) biosynthesis; nicotinamide D-ribonucleotide from 5-phospho-alpha-D-ribose 1-diphosphate and nicotinamide: step 1/1. Functionally, catalyzes the condensation of nicotinamide with 5-phosphoribosyl-1-pyrophosphate to yield nicotinamide mononucleotide, an intermediate in the biosynthesis of NAD. The polypeptide is Nicotinamide phosphoribosyltransferase (Mycoplasma genitalium (strain ATCC 33530 / DSM 19775 / NCTC 10195 / G37) (Mycoplasmoides genitalium)).